The primary structure comprises 560 residues: Nitrite reductase (560 aa).

The N-terminal stretch at 1–26 (MSNVGKPILAGLIAGLSLLGLAVAQA) is a signal peptide. The N-terminal tail stretch occupies residues 27–29 (AAP). Positions 30-126 (EMTAEEKEAS…ARYIQHTPDI (97 aa)) constitute a Cytochrome c domain. Residues Cys-47, Cys-50, and His-51 each contribute to the heme c site. A disordered region spans residues 61–80 (KNLEPHWSKTEADGKKTEGG). Basic and acidic residues predominate over residues 63-78 (LEPHWSKTEADGKKTE). Heme c contacts are provided by Thr-97 and Met-101. A D1-heme domain region spans residues 127–560 (PPEFSLQDMK…NVFNTMNDVY (434 aa)). Heme d1-binding residues include His-193, Arg-236, Ser-237, Tyr-256, Arg-382, and Gln-500.

As to quaternary structure, homodimer in solution. Heme c serves as cofactor. Requires heme as cofactor.

The protein resides in the periplasm. It carries out the reaction nitric oxide + Fe(III)-[cytochrome c] + H2O = Fe(II)-[cytochrome c] + nitrite + 2 H(+). The catalysed reaction is A + NH4(+) + H2O = hydroxylamine + AH2 + H(+). The chain is Nitrite reductase (nirS) from Stutzerimonas stutzeri (Pseudomonas stutzeri).